We begin with the raw amino-acid sequence, 454 residues long: MDYAAERAPPGVQIYMDVGDPDGWRYCGNDMNIVERDQSANFIIFVTSDINDTDKSFKLRFQEEFRPVLDADINGSFDCHYGCSQSRVWPEGSPESVSSPVMFVVSNIALVSWSCFKIKEVKTAEDYSWKQPTIHVQWNAETGSQIVHVFGFNPDQQSVFMDKLPTAAERKCNPFSLHAAFSRIILQQYDDAFWLLRDLVRHHEKARSKEKKPKRKKSKAEKEHERKIFPLLHDIARHLFHYQETIEVAEHTLQVMAKELLNWRHEDGNNIQQNIGTWLETRRRILHEEKRAHSLKTRSKSLNDRHQNEINLRQAFNLVSQDFGRDARSDSNMMTTVAFVSMVYLPGTFVSGLFGTNFFSFQADPGNTWLTADEFWMYWAVTIPLTLLTLGVWGVWHWWDTYVGWVQKMRDKKAKSTKSDEKDATADRNPEPFNLRQRIRTATRLNEIQRKETV.

N-linked (GlcNAc...) asparagine glycans are attached at residues N51 and N74. Residues 205–219 (KARSKEKKPKRKKSK) are compositionally biased toward basic residues. A disordered region spans residues 205–224 (KARSKEKKPKRKKSKAEKEH). Transmembrane regions (helical) follow at residues 334 to 354 (MTTVAFVSMVYLPGTFVSGLF) and 375 to 395 (FWMYWAVTIPLTLLTLGVWGV).

The protein localises to the membrane. Its function is as follows. Part of the gene cluster that mediates the biosynthesis of notoamide, a fungal indole alkaloid that belongs to a family of natural products containing a characteristic bicyclo[2.2.2]diazaoctane core. The first step of notoamide biosynthesis involves coupling of L-proline and L-tryptophan by the bimodular NRPS notE', to produce cyclo-L-tryptophan-L-proline called brevianamide F. The reverse prenyltransferase notF' then acts as a deoxybrevianamide E synthase and converts brevianamide F to deoxybrevianamide E via reverse prenylation at C-2 of the indole ring leading to the bicyclo[2.2.2]diazaoctane core. Deoxybrevianamide E is further hydroxylated at C-6 of the indole ring, likely catalyzed by the cytochrome P450 monooxygenase notG', to yield 6-hydroxy-deoxybrevianamide E. 6-hydroxy-deoxybrevianamide E is a specific substrate of the prenyltransferase notC' for normal prenylation at C-7 to produce 6-hydroxy-7-prenyl-deoxybrevianamide, also called notoamide S. As the proposed pivotal branching point in notoamide biosynthesis, notoamide S can be diverted to notoamide E through an oxidative pyran ring closure putatively catalyzed by either notH' cytochrome P450 monooxygenase or the notD' FAD-linked oxidoreductase. This step would be followed by an indole 2,3-epoxidation-initiated pinacol-like rearrangement catalyzed by the notB' FAD-dependent monooxygenase leading to the formation of notoamide C and notoamide D. On the other hand notoamide S is converted to notoamide T by notH' (or notD'), a bifunctional oxidase that also functions as the intramolecular Diels-Alderase responsible for generation of (-)-notoamide T. To generate antipodal (+)-notoaminide T, notH (or notD) in Aspergillus strain MF297-2 is expected to catalyze a Diels-Alder reaction leading to the opposite stereochemistry. The remaining oxidoreductase notD' (or notH') likely catalyzes the oxidative pyran ring formation to yield (-)-stephacidin A. The FAD-dependent monooxygenase notI' is highly similar to notB' and is predicted to catalyze a similar conversion from (-)-stephacidin A to (+)-notoamide B via the 2,3-epoxidation of (-)-stephacidin A followed by a pinacol-type rearrangement. Finally, it remains unclear which enzyme could be responsible for the final hydroxylation steps leading to notoamide A and sclerotiamide. The function of notM' in the notoamide biosynthesis has not been determined yet. In Aspergillus versicolor, this protein is Notoamide biosynthesis cluster protein M'.